Here is a 146-residue protein sequence, read N- to C-terminus: Leptin (146 aa).

Residues Cys96 and Cys146 are joined by a disulfide bond.

The protein belongs to the leptin family.

The protein resides in the secreted. In terms of biological role, key player in the regulation of energy balance and body weight control. Once released into the circulation, has central and peripheral effects by binding LEPR, found in many tissues, which results in the activation of several major signaling pathways. In the hypothalamus, acts as an appetite-regulating factor that induces a decrease in food intake and an increase in energy consumption by inducing anorexinogenic factors and suppressing orexigenic neuropeptides, also regulates bone mass and secretion of hypothalamo-pituitary-adrenal hormones. In the periphery, increases basal metabolism, influences reproductive function, regulates pancreatic beta-cell function and insulin secretion, is pro-angiogenic for endothelial cell and affects innate and adaptive immunity. In the arcuate nucleus of the hypothalamus, activates by depolarization POMC neurons inducing FOS and SOCS3 expression to release anorexigenic peptides and inhibits by hyperpolarization NPY neurons inducing SOCS3 with a consequent reduction on release of orexigenic peptides. In addition to its known satiety inducing effect, has a modulatory role in nutrient absorption. In the intestine, reduces glucose absorption by enterocytes by activating PKC and leading to a sequential activation of p38, PI3K and ERK signaling pathways which exerts an inhibitory effect on glucose absorption. Acts as a growth factor on certain tissues, through the activation of different signaling pathways increases expression of genes involved in cell cycle regulation such as CCND1, via JAK2-STAT3 pathway, or VEGFA, via MAPK1/3 and PI3K-AKT1 pathways. May also play an apoptotic role via JAK2-STAT3 pathway and up-regulation of BIRC5 expression. Pro-angiogenic, has mitogenic activity on vascular endothelial cells and plays a role in matrix remodeling by regulating the expression of matrix metalloproteinases (MMPs) and tissue inhibitors of metalloproteinases (TIMPs). In innate immunity, modulates the activity and function of neutrophils by increasing chemotaxis and the secretion of oxygen radicals. Increases phagocytosis by macrophages and enhances secretion of pro-inflammatory mediators. Increases cytotoxic ability of NK cells. Plays a pro-inflammatory role, in synergy with IL1B, by inducing NOS2 which promotes the production of IL6, IL8 and Prostaglandin E2, through a signaling pathway that involves JAK2, PI3K, MAP2K1/MEK1 and MAPK14/p38. In adaptive immunity, promotes the switch of memory T-cells towards T helper-1 cell immune responses. Increases CD4(+)CD25(-) T-cell proliferation and reduces autophagy during TCR (T-cell receptor) stimulation, through MTOR signaling pathway activation and BCL2 up-regulation. This is Leptin (LEP) from Gorilla gorilla gorilla (Western lowland gorilla).